Reading from the N-terminus, the 3010-residue chain is MIESTSNKSRDVAVIGIGLRLPGGSNTPLELWNNLIKGIDGIVETKERWSDTFSEMGEVSSKYAGLIDFDQWMSFDPLHFAINPSDAKEIDPQQKILLKTTWEAFEDAQIDPLSLRGSDTSVYVGASSMDYASINTDPNKQPINCFNVNLSGVSNRISYCYDLRGTSLTIDTACSSSLNAVHLGYESIVNGKSDYSIVGGVNFIINPQQSRAFKYAMVTSKTGKCKAFDESADGFVRSEGAVVLILKSLSKSIEDGNQIYSIIKGSSSNVDGTLNKTNYFAPSKVSQSNNMQKAFDSTNGELTPNDISFFELHGTGTQIGDPIEVEAVSTLFKDIKTKESPLLIGSIKSNIGHLEPASGVASLAKVCLMLKNREFVKNIHFETPNPNIKFDEWKVKVCTQNTPFPTIRGKPISIAINSFGITGSNACLLLSEYLKTNITTTNDQLEPSTTSYLIPLSSSSKKSLELYKNELTNNIETFSKSIEFKDFISYHINSKAIKLASRSVLMVKDWDELKSSLNLNEPLIYSSKGNKSGNIMKDNNKNPILVFVFCGIGGQWNQMGKQLYETSKVFKQSIDEIDQIFNRLFGYSILKKLRSISDDDSKGINEFITSQPSIFMLQVSLFEFYKSWGINPSINVGHSFGEISSACCSGMLDLETACFIVYKRSIIQTKTIGSGGMLVIGLSEDEYKKQYQSQYPLIEISCFNSPSSIVISGSELDLTTITSSLKEKNIFTYLLGSPAALHSSKQKVIKDDILTQLKDIKFKQPTIKTFSTVTTNLFDNSTTPFDSNYIFSNIRKPVSFEKTIKNIFNHIETNDLGSNVIFLELSPLPTLTNYIKEMIPQNSNYFYIDDESITILTSLNKKKSIDELQEIKSTISQIYCSGYNVNFKSQLTTTTTTTFGNLIIDSNKIVKGFTSYYLPRYQWDESNYFKVGRISKQISQGPTATQLGYRNDVSPFMSYTSYIDIKEEPFKFLKCHQSRGRNLFPGNAYLENVLKVFPDQDLTFHLIEYRSPLILKEGIKHIISTNIYPSAKNEYRVTFHYKDSFDKWILGCSARFSVLKHNSDLENQKIDVESLKAKCNWTTIKRKEFYEVLKTNTSLALTGQFQCIEEAYYGYNCCLAKISMNETLTKLSQYDNELFLNACTIDGGFQLLGLFRDNPDTFVMDRVELLRFYASNIPKSSKFRENYPFIYTYTEFISQIGNSVYANINTFLPDGTLLFNTPVVCYSSISTDIKNQLSIENPNHQLYSTVLQSLESPLSVTTQNAIIDEKLFLSFLPTPVANIRKAFTTCIFSNIKKIYQSITPAKINTSTVDSLIDSYFKICETDNIEKRKLGETLFNALKLNYSIIEYSSQAKLIKLLSTNQIEIMNKITTHLLNETKPTTNTTETTPVSSSQKLPEQIQLIENIITKSVLPLVNEKIVFRILEISSGIGQLSKIIVTRLNELLQQNPLAEIDIELTFTDREDITLIKEKLTTLLYSTSSTADINSKDLSSRKTSLIFTQLDLNDKDLISSKTIYPSYYDIIVLNGLDGIKDLNQSIETIYQILNPNGYFIMIDTLFKANKSDLKNYELYQQWLSFNYFDSTKDLDSWKKLLTQDFKLINFTATSSQPWVILCQKPRFFETVSTENPISTTLSCYDQVIIFGTIDNINESKALSKLMDVNDRGTDIYCIKTLDEFETHVKETPLTDESVIVYVNTINQVFISFISYSLEYIKINQHLLRTNCNAKHVLLTRSAFIETTNTLVSATVGAFRYFCEFSQLDLYLMDFDDSIYLKSMQFINVTHEMTNPNKHYQREFIFRGDKVYYERVTQETNLKLKLKSTSYISEPTQLYAKLGQNLQYQLKPFENKIPEGFIEVKVLASGINFKDNLVYRRLVPNEAVNHTGNSNDPEFGYECSGIVSRVGDGVTKFKVGDEVVGLGFNCTGSFVTLEQFRFVLKPKNLTHVEAASIPVVYLTSYYSLFVAGYLSIEKKESVLIHGGTGGIGLACINLLKAKGFKGYLFVTVGSKEKENFLRVTYGNFITGIYSSQNTDYLLEIKKKIQQLTGNNLIFKQFGVAKMGIDLIINTLSNEFMDANFNSLCQGGRIIDLSVTHMNSQDTTDFRKFRYCISYSSVELLLNGFERNKLILQEVMDMFVNENLALLPIKEYSVKDIKEAIEFIAERKHIGKIVVNHENYDLISQTLVSNDNEFYKDFLIPKANYRISADCNLGKTVLLTGQLGLSLSIIKWIIAFNNLEQPVENILVLSLSPIKYELEHMICYCKHVNNQIKIIFKQVDISDMCALDDAIGEIYKENENLPLVSSIFHNAFAPSECDALDIDEDHLRISHSAKTMGMINLNSLSTGIWSESIKNFVLSSSITSILGSQRQCGYISANCIIDAVSRLRASEGLPCTSINWGVLGTGFVSRNESVSKLFEYQGFIPISMDMLIGTLDLFLQNSGKLNNKIVASFNYNNVSAAFRNHHLSYKLNYFLNPVYSKGSTFDDNELSIRDDILEKFSEYLSTEKSKLSLDIKLIDYGSSSIMLVELKNYLDKTYTPNILSIAQLQNVTINQLIQAVIQAVSKLKKPTTNQQSQQPIISNIKWEDEIALDPTIKPTQQIIDTYKNEMTQLYKNNNNKTSLGGLQVLLTGPCTFSGTHILSNLLLSSKTKVIHCLLPMETPEQVMCTIIDNFKAQGLYDQLNLANVLSKIKPIAADFTRPIFGLDTDDYIELSKKIDIVINAASNTTKHYCAHISYEDTNKEYLHGVSHLLRFASSEKLKRVVQISTLGRYSDLQRNSLDEYYFPEVDFSFISDQNQLVSGYIQSKIVAEYHLKQASNRGIPCLIVRTPFTFPGNNGIGREADFTQLLLQSCYTLNCYPTESHIQLYTAPVTWYAKNITLMAVGSDISQDGCWDTINTSPIENLLCFNLFGGGFDFGDLLVDISKDLSWKEVPFETLVKKAAVNETECCKRLASFVLKKKGDFLKNLGVIPGNFTVNENLKNYLTLNNSFDGWLVTKQLVYNHLSYVFKKKVF.

Positions 9-432 (SRDVAVIGIG…GSNACLLLSE (424 aa)) constitute a Ketosynthase family 3 (KS3) domain. Residues cysteine 174, histidine 313, and histidine 353 each act as for beta-ketoacyl synthase activity in the active site. Residues 629–662 (GINPSINVGHSFGEISSACCSGMLDLETACFIVY) form an acyl/malonyl transferase region. Serine 639 acts as the For acyl/malonyl transferase activity in catalysis. Residues 944–1063 (ATQLGYRNDV…ARFSVLKHNS (120 aa)) form an N-terminal hotdog fold region. Positions 944-1235 (ATQLGYRNDV…YSSISTDIKN (292 aa)) constitute a PKS/mFAS DH domain. The Proton acceptor; for dehydratase activity role is filled by histidine 976. The tract at residues 1080–1235 (NWTTIKRKEF…YSSISTDIKN (156 aa)) is C-terminal hotdog fold. Catalysis depends on aspartate 1146, which acts as the Proton donor; for dehydratase activity. Positions 2482–2559 (DNELSIRDDI…QLIQAVIQAV (78 aa)) constitute a Carrier domain. At serine 2519 the chain carries O-(pantetheine 4'-phosphoryl)serine.

Pantetheine 4'-phosphate serves as cofactor.

Probable polyketide synthase. The chain is Probable polyketide synthase 2 (pks2) from Dictyostelium discoideum (Social amoeba).